The sequence spans 195 residues: PE-PGRS family protein PE_PGRS61 (195 aa).

This sequence belongs to the mycobacterial PE family. PGRS subfamily. Interacts with human TLR2.

The protein localises to the secreted. Its subcellular location is the cell wall. The protein resides in the cell surface. Binding of Ca(2+) to PE_PGRS61 induces conformational changes and increases affinity for TLR2. Functionally, mediates Ca(2+)-dependent up-regulation of the anti-inflammatory cytokine IL-10. This is PE-PGRS family protein PE_PGRS61 from Mycobacterium tuberculosis (strain ATCC 25618 / H37Rv).